The following is an 84-amino-acid chain: uncharacterized protein (84 aa).

This is an uncharacterized protein from Bos taurus (Bovine).